A 176-amino-acid chain; its full sequence is Macro domain-containing protein lmo2759 (176 aa).

One can recognise a Macro domain in the interval 1–175; it reads MEITIVKGDI…LYNKLINSEV (175 aa).

This sequence belongs to the MacroD-type family.

The protein is Macro domain-containing protein lmo2759 of Listeria monocytogenes serovar 1/2a (strain ATCC BAA-679 / EGD-e).